We begin with the raw amino-acid sequence, 98 residues long: Large ribosomal subunit protein uL23 (98 aa).

This sequence belongs to the universal ribosomal protein uL23 family. As to quaternary structure, part of the 50S ribosomal subunit. Contacts protein L29, and trigger factor when it is bound to the ribosome.

Its function is as follows. One of the early assembly proteins it binds 23S rRNA. One of the proteins that surrounds the polypeptide exit tunnel on the outside of the ribosome. Forms the main docking site for trigger factor binding to the ribosome. In Borreliella afzelii (strain PKo) (Borrelia afzelii), this protein is Large ribosomal subunit protein uL23.